The following is a 392-amino-acid chain: Probable glucan endo-1,6-beta-glucosidase B (392 aa).

Positions 1–18 are cleaved as a signal peptide; it reads MKVTRLAVLNTLATLTVA. Asn31 carries an N-linked (GlcNAc...) asparagine glycan. Catalysis depends on Glu220, which acts as the Proton donor. Residue Glu322 is the Nucleophile of the active site.

It belongs to the glycosyl hydrolase 5 (cellulase A) family.

Its subcellular location is the secreted. It catalyses the reaction Random hydrolysis of (1-&gt;6)-linkages in (1-&gt;6)-beta-D-glucans.. Beta-glucanases participate in the metabolism of beta-glucan, the main structural component of the cell wall. Acts on lutean, pustulan and 1,6-oligo-beta-D-glucosides. The chain is Probable glucan endo-1,6-beta-glucosidase B (exgB) from Aspergillus flavus (strain ATCC 200026 / FGSC A1120 / IAM 13836 / NRRL 3357 / JCM 12722 / SRRC 167).